A 240-amino-acid chain; its full sequence is Probable transcriptional regulatory protein OEOE_0768 (240 aa).

The segment at 1-21 (MSGHSKWHNIQGRKNAQDAKR) is disordered.

The protein belongs to the TACO1 family.

It localises to the cytoplasm. The chain is Probable transcriptional regulatory protein OEOE_0768 from Oenococcus oeni (strain ATCC BAA-331 / PSU-1).